A 324-amino-acid polypeptide reads, in one-letter code: Glyoxylate/hydroxypyruvate reductase B (324 aa).

Active-site residues include Arg-237 and Glu-266. His-285 (proton donor) is an active-site residue.

It belongs to the D-isomer specific 2-hydroxyacid dehydrogenase family. GhrB subfamily. As to quaternary structure, homodimer.

It is found in the cytoplasm. It carries out the reaction glycolate + NADP(+) = glyoxylate + NADPH + H(+). The enzyme catalyses (R)-glycerate + NAD(+) = 3-hydroxypyruvate + NADH + H(+). It catalyses the reaction (R)-glycerate + NADP(+) = 3-hydroxypyruvate + NADPH + H(+). Its function is as follows. Catalyzes the NADPH-dependent reduction of glyoxylate and hydroxypyruvate into glycolate and glycerate, respectively. The sequence is that of Glyoxylate/hydroxypyruvate reductase B from Salmonella typhi.